The sequence spans 327 residues: Gonadotropin-releasing hormone receptor (327 aa).

The Extracellular segment spans residues 1 to 38 (MANNASLEQDPNHCSAINNSIPLIQGKLPTLTVSGKIR). N-linked (GlcNAc...) asparagine glycosylation is found at N4 and N18. Residues 39-58 (VTVTFFLFLLSTAFNASFLL) traverse the membrane as a helical segment. At 59 to 77 (KLQKWTQKRKKGKKLSRMK) the chain is on the cytoplasmic side. A helical membrane pass occupies residues 78–97 (VLLKHLTLANLLETLIVMPL). The Extracellular segment spans residues 98–115 (DGMWNITVQWYAGEFLCK). An N-linked (GlcNAc...) asparagine glycan is attached at N102. A disulfide bond links C114 and C195. Residues 116 to 137 (VLSYLKLFSMYAPAFMMVVISL) traverse the membrane as a helical segment. The Cytoplasmic portion of the chain corresponds to 138-164 (DRSLAITQPLAVQSNSKLEQSMISLAW). Residues 165-184 (ILSIVFAGPQLYIFRMIYLA) form a helical membrane-spanning segment. At 185-211 (DGSGPTVFSQCVTHCSFPQWWHQAFYN) the chain is on the extracellular side. The helical transmembrane segment at 212-231 (FFTFGCLFIIPLLIMLICNA) threads the bilayer. At 232 to 280 (KIIFALTRVLHQDPRKLQLNQSKNNIPRARLRTLKMTVAFATSFVVCWT) the chain is on the cytoplasmic side. A helical transmembrane segment spans residues 281-299 (PYYVLGIWYWFDPEMLNRV). Over 300–305 (SEPVNH) the chain is Extracellular. The helical transmembrane segment at 306-325 (FFFLFAFLNPCFDPLIYGYF) threads the bilayer. Over 326 to 327 (SL) the chain is Cytoplasmic.

It belongs to the G-protein coupled receptor 1 family. Pituitary gland.

The protein localises to the cell membrane. Functionally, receptor for gonadotropin releasing hormone (GnRH) that mediates the action of GnRH to stimulate the secretion of the gonadotropic hormones luteinizing hormone (LH) and follicle-stimulating hormone (FSH). This receptor mediates its action by association with G-proteins that activate a phosphatidylinositol-calcium second messenger system. The protein is Gonadotropin-releasing hormone receptor (Gnrhr) of Mus musculus (Mouse).